We begin with the raw amino-acid sequence, 67 residues long: Light-harvesting protein B-870 alpha chain (67 aa).

Methionine 1 carries the post-translational modification N-formylmethionine; in strain DSM 149 and DSM 151. Residues 1-12 (MWRIWRLFDPMR) lie on the Cytoplasmic side of the membrane. Residues 13–33 (AMVAQAVFLLGLAVLIHLMLL) form a helical membrane-spanning segment. A bacteriochlorophyll is bound at residue histidine 29. The Periplasmic segment spans residues 34–67 (GTNKYNWLDGAKKAPAATAVAPVPAEVTSLAQAK).

It belongs to the antenna complex alpha subunit family. An alpha/beta heterodimer. The core complex is formed by different alpha and beta chains, binding bacteriochlorophyll molecules, and arranged most probably in tetrameric structures disposed around the reaction center. The non-pigmented gamma chains may constitute additional components. In terms of processing, the N-terminus is blocked.

It is found in the cell inner membrane. Functionally, antenna complexes are light-harvesting systems, which transfer the excitation energy to the reaction centers. This chain is Light-harvesting protein B-870 alpha chain (pufA), found in Rubrivivax gelatinosus (Rhodocyclus gelatinosus).